We begin with the raw amino-acid sequence, 1116 residues long: uncharacterized protein (1116 aa).

The chain crosses the membrane as a helical span at residues 3-20 (FFLTFLLFLFTLFSLFVY).

The protein resides in the membrane. This is an uncharacterized protein from Aquifex aeolicus (strain VF5).